A 372-amino-acid chain; its full sequence is Alginate lyase (372 aa).

Positions Met-1–Ala-22 are cleaved as a signal peptide. Residues Ser-61 to Lys-62, His-134 to Thr-135, and Tyr-252 contribute to the substrate site.

Belongs to the polysaccharide lyase 5 family.

The protein localises to the periplasm. The enzyme catalyses Eliminative cleavage of alginate to give oligosaccharides with 4-deoxy-alpha-L-erythro-hex-4-enuronosyl groups at their non-reducing ends and beta-D-mannuronate at their reducing end.. Its activity is regulated as follows. Monovalent cations such as potassium and sodium enhance activity, as well as a combined action of these cations with magnesium. However, other cations like calcium, cobalt, manganese and zinc, or the presence of EDTA, do not affect the enzymatic activity. Catalyzes the depolymerization of alginate by cleaving the beta-1,4 glycosidic bond between two adjacent sugar residues via a beta-elimination mechanism. Degrades deacetylated polymannuronate alginate more efficiently than non-deacetylated polyM. Is able to degrade its own alginate, but at a lower efficiency than that produced from M.pyriferia and P.aeruginosa. May serve to degrade mislocalized alginate that is trapped in the periplasmic space. The sequence is that of Alginate lyase from Azotobacter chroococcum mcd 1.